The primary structure comprises 531 residues: Outer dynein arm-docking complex subunit 4 (531 aa).

3 TPR repeats span residues 15 to 48 (FSTYMAEGEQLYHKAEYKKASDSFTAALQLQPEE), 50 to 82 (NCLVARSKCFLKLGEPECALKDAEASLQIENDF), and 83 to 116 (FKGLYQKAEALYAMGDFEFALVHYHRGYKLRPEF). Residues 161–185 (KQKAQVKVQKKDSKQQKKVDPERSQ) form a disordered region. Over residues 169 to 185 (QKKDSKQQKKVDPERSQ) the composition is skewed to basic and acidic residues. TPR repeat units follow at residues 275 to 307 (VKSLEEIDQLLSSGKAEESYKKAQLVLKKVERW), 320 to 353 (GSLHSCIGNAQMDMGQIEAALQSHKKDLAIAEKY), 360 to 393 (SRALDNIGRVYARIGKFNEAIKVWEEKIPLANSS), 397 to 430 (TWLYHEIGRCYLELEQTAEAKEYGEKSQQEADAA), and 437 to 470 (LNACVLLAQAEVKLKHYQSAISSFENALERARLL). Residues 487–531 (KQGMEEQQESEQNNDENDNLRADGNTARDEEEEDVHVQRTEEDEG) form a disordered region. Positions 492 to 503 (EQQESEQNNDEN) are enriched in acidic residues. A compositionally biased stretch (basic and acidic residues) spans 521–531 (VHVQRTEEDEG).

As to quaternary structure, component of the outer dynein arm-docking complex. As to expression, in the mucociliary epithelium, specifically expressed in ciliated cells.

It is found in the cytoplasm. It localises to the cytoskeleton. The protein localises to the cilium axoneme. Its function is as follows. Component of the outer dynein arm-docking complex (ODA-DC) that mediates outer dynein arms (ODA) binding onto the doublet microtubule. Plays an essential role for the assembly of ODA-DC and in the docking of ODA in ciliary axoneme. Required for the docking of the outer dynein arm to cilia, hence plays an essential role in cilia motility. This Xenopus laevis (African clawed frog) protein is Outer dynein arm-docking complex subunit 4 (odad4).